The primary structure comprises 176 residues: ATP synthase subunit b (176 aa).

The chain crosses the membrane as a helical span at residues 7 to 27 (IQIPDGSAIFVLLTFILLMFI). The disordered stretch occupies residues 75–94 (SQSQATALMENARKSSEEQS). The span at 85 to 94 (NARKSSEEQS) shows a compositional bias: basic and acidic residues.

Belongs to the ATPase B chain family. F-type ATPases have 2 components, F(1) - the catalytic core - and F(0) - the membrane proton channel. F(1) has five subunits: alpha(3), beta(3), gamma(1), delta(1), epsilon(1). F(0) has three main subunits: a(1), b(2) and c(10-14). The alpha and beta chains form an alternating ring which encloses part of the gamma chain. F(1) is attached to F(0) by a central stalk formed by the gamma and epsilon chains, while a peripheral stalk is formed by the delta and b chains.

Its subcellular location is the cell membrane. F(1)F(0) ATP synthase produces ATP from ADP in the presence of a proton or sodium gradient. F-type ATPases consist of two structural domains, F(1) containing the extramembraneous catalytic core and F(0) containing the membrane proton channel, linked together by a central stalk and a peripheral stalk. During catalysis, ATP synthesis in the catalytic domain of F(1) is coupled via a rotary mechanism of the central stalk subunits to proton translocation. Functionally, component of the F(0) channel, it forms part of the peripheral stalk, linking F(1) to F(0). The chain is ATP synthase subunit b from Oenococcus oeni (strain ATCC BAA-331 / PSU-1).